The primary structure comprises 336 residues: Inositol 2-dehydrogenase (336 aa).

It belongs to the Gfo/Idh/MocA family. Homotetramer.

The enzyme catalyses myo-inositol + NAD(+) = scyllo-inosose + NADH + H(+). Involved in the oxidation of myo-inositol (MI) to 2-keto-myo-inositol (2KMI or 2-inosose). The polypeptide is Inositol 2-dehydrogenase (Acidiphilium cryptum (strain JF-5)).